The primary structure comprises 310 residues: tRNA-cytidine(32) 2-sulfurtransferase (310 aa).

A PP-loop motif motif is present at residues 47 to 52 (SGGKDS). [4Fe-4S] cluster contacts are provided by Cys122, Cys125, and Cys213.

Belongs to the TtcA family. In terms of assembly, homodimer. Mg(2+) serves as cofactor. It depends on [4Fe-4S] cluster as a cofactor.

It localises to the cytoplasm. It catalyses the reaction cytidine(32) in tRNA + S-sulfanyl-L-cysteinyl-[cysteine desulfurase] + AH2 + ATP = 2-thiocytidine(32) in tRNA + L-cysteinyl-[cysteine desulfurase] + A + AMP + diphosphate + H(+). It participates in tRNA modification. Catalyzes the ATP-dependent 2-thiolation of cytidine in position 32 of tRNA, to form 2-thiocytidine (s(2)C32). The sulfur atoms are provided by the cysteine/cysteine desulfurase (IscS) system. The protein is tRNA-cytidine(32) 2-sulfurtransferase of Haemophilus influenzae (strain 86-028NP).